We begin with the raw amino-acid sequence, 344 residues long: MMASLKAEETSQMQLVEREENDEDEDLFEMIDKLIAQGINAGDVKKLQEAGIHTCNGLMMHTKKNLTGIKGLSEAKVDKICEAAEKIVNFGYMTGSDALIKRKSVVKITTGCQALDDLLGGGIETSAITEAFGEFRSGKTQLAHTLCVTTQLPTNMKGGNGKVAYIDTEGTFRPDRIVPIAERFGMDPGAVLDNIIYARAYTYEHQYNLLLGLAAKMSEEPFRILIVDSIIALFRVDFTGRGELADRQQKLAQMLSRLIKIAEEFNVAVYMTNQVIADPGGGMFISDPKKPAGGHVLAHAATIRLLFRKGKGDTRVCKVYDAPNLAEAEASFQITQGGIADAKD.

Residues 1-22 are disordered; the sequence is MMASLKAEETSQMQLVEREEND. 133-140 provides a ligand contact to ATP; the sequence is GEFRSGKT. Residue Arg235 coordinates dsDNA. Arg235, Phe238, Arg241, Arg247, and Arg315 together coordinate ssDNA. 2 residues coordinate dsDNA: Arg241 and Arg247.

This sequence belongs to the RecA family. DMC1 subfamily. As to quaternary structure, double stacked ring-shaped homooctamer. Interacts with BRCA2A and BRCA2B. As to expression, expressed in mitotic and/or meiotic tissues. Expressed in roots, leaves and anthers and carpels of young fower buds.

Its subcellular location is the nucleus. Functionally, may participate in meiotic recombination, specifically in homologous strand assimilation, which is required for the resolution of meiotic double-strand breaks. Mediates interhomolog recombination during meiosis. The sequence is that of Meiotic recombination protein DMC1 homolog from Arabidopsis thaliana (Mouse-ear cress).